The primary structure comprises 65 residues: Alpha-toxin Bs-Tx28 (65 aa).

One can recognise an LCN-type CS-alpha/beta domain in the interval 3-65 (RDAYIADDKN…VPIRIPGKCR (63 aa)). Intrachain disulfides connect Cys-13–Cys-64, Cys-17–Cys-37, Cys-23–Cys-47, and Cys-27–Cys-49. Arg-65 carries the post-translational modification Arginine amide.

It belongs to the long (4 C-C) scorpion toxin superfamily. Sodium channel inhibitor family. Alpha subfamily. Expressed by the venom gland.

It localises to the secreted. Alpha toxins bind voltage-independently at site-3 of sodium channels (Nav) and inhibit the inactivation of the activated channels, thereby blocking neuronal transmission. This toxin inhibits the inactivation of activated TTX-sensitive sodium channels (Nav). This is Alpha-toxin Bs-Tx28 from Hottentotta tamulus sindicus (Scorpion).